Consider the following 387-residue polypeptide: MKDIVIVDCIRTPMGRSKNGVFRHTRAEDLSAALMKGLLERNPEVDPEELEDIYWGCVQQTLEQGFNIARNSALIAGIPHKVAGVTVNRLCGSSMQALHDATRAIMNGDGDIFMAGGVEHMGHVPMTHGIDFHPGMNKSVAKASGSMGMTAELLSRKFGITREQQDEFGARSHRKAHEATVEGRFAKEIYAMNGHNADGELVRVTEDEVIRPETTAEGLSQLRPVFDPANGTVTAGTSSALSDGAAAMLVMSADKAKELGLTPRVKIRSMAVAGCDPSIMGYGPVPATEKALKRAGVSIDDIDVVELNEAFAAQSLPVLKGLKLFDKMEEKVNLNGGAIALGHPLGCSGARISTTLINLMEEKDAKLGLATMCIGLGQGIATVFERV.

The active-site Acyl-thioester intermediate is the cysteine 91. Catalysis depends on proton acceptor residues histidine 343 and cysteine 373.

The protein belongs to the thiolase-like superfamily. Thiolase family. In terms of assembly, heterotetramer of two alpha chains (FadB) and two beta chains (FadA).

The protein resides in the cytoplasm. It carries out the reaction an acyl-CoA + acetyl-CoA = a 3-oxoacyl-CoA + CoA. It functions in the pathway lipid metabolism; fatty acid beta-oxidation. Its function is as follows. Catalyzes the final step of fatty acid oxidation in which acetyl-CoA is released and the CoA ester of a fatty acid two carbons shorter is formed. The protein is 3-ketoacyl-CoA thiolase of Idiomarina loihiensis (strain ATCC BAA-735 / DSM 15497 / L2-TR).